The primary structure comprises 385 residues: Podocin (385 aa).

Basic and acidic residues predominate over residues 1–27; the sequence is MDSRARSSSREAHGRSSRSSSRDDKKA. The disordered stretch occupies residues 1–64; that stretch reads MDSRARSSSR…GEPRAPAATA (64 aa). Over 1–104 the chain is Cytoplasmic; the sequence is MDSRARSSSR…IKPSGLGACE (104 aa). The S-palmitoyl cysteine moiety is linked to residue Cys-103. A helical transmembrane segment spans residues 105 to 125; the sequence is WLLVLASLIFIIMTFPFSIWF. The Extracellular segment spans residues 126 to 385; that stretch reads CIKVVQEYER…NPKKKDSPML (260 aa). The segment covering 357 to 370 has biased composition (polar residues); that stretch reads NRAQGSINYPSSSK. A disordered region spans residues 357 to 385; sequence NRAQGSINYPSSSKPVEPLNPKKKDSPML. Over residues 376-385 the composition is skewed to basic and acidic residues; sequence NPKKKDSPML.

This sequence belongs to the band 7/mec-2 family. Interacts with nephrin/NPHS1, KIRRL1 and CD2AP. Interacts with DDN.

The protein localises to the membrane. In terms of biological role, plays a role in the regulation of glomerular permeability, acting probably as a linker between the plasma membrane and the cytoskeleton. In Mus musculus (Mouse), this protein is Podocin (Nphs2).